The following is a 1013-amino-acid chain: GTPase-activating Rap/Ran-GAP domain-like protein 3 (1013 aa).

Residue Ser-45 is modified to Phosphoserine. A Rap-GAP domain is found at 191-407 (LLVLEEQEGS…RTLDMLIRSL (217 aa)). Ser-426 and Ser-432 each carry phosphoserine. A CNH domain is found at 489–800 (PHEAVCADPW…QLVASRSDIY (312 aa)). 2 disordered regions span residues 810 to 842 (VSSG…SLGE) and 913 to 1013 (LLGL…IDLK). A compositionally biased stretch (low complexity) spans 811–821 (SSGGSSKGASA). The residue at position 827 (Thr-827) is a Phosphothreonine. Residues 952–962 (SSSSDRIPSGS) are compositionally biased toward low complexity. Composition is skewed to polar residues over residues 963–982 (LESA…SSDQ) and 993–1003 (VSGSSPFQLTA).

Belongs to the GARNL3 family.

This Homo sapiens (Human) protein is GTPase-activating Rap/Ran-GAP domain-like protein 3 (GARNL3).